The chain runs to 878 residues: Serine/threonine-protein kinase N3 (878 aa).

3 consecutive REM-1 domains span residues 2 to 77, 86 to 165, and 169 to 238; these read EHRK…QVLL, SEPQ…SGSP, and PDLL…RLPP. S164 carries the post-translational modification Phosphoserine. The interval 461–525 is disordered; the sequence is PNTASPPKGR…TPCTKRPHMD (65 aa). A Protein kinase domain is found at 548-807; it reads FRCLAVLGRG…AEEIKVQPFF (260 aa). ATP is bound by residues 554–562 and K577; that span reads LGRGHFGKV. Residue D673 is the Proton acceptor of the active site. Phosphothreonine is present on residues T707, T711, and T849. Residues 808-878 form the AGC-kinase C-terminal domain; the sequence is RTTNWQALLA…DFVSEQFLES (71 aa).

Belongs to the protein kinase superfamily. AGC Ser/Thr protein kinase family. PKC subfamily. In terms of processing, autophosphorylated.

The protein localises to the nucleus. It is found in the cytoplasm. Its subcellular location is the perinuclear region. It catalyses the reaction L-seryl-[protein] + ATP = O-phospho-L-seryl-[protein] + ADP + H(+). The enzyme catalyses L-threonyl-[protein] + ATP = O-phospho-L-threonyl-[protein] + ADP + H(+). Its activity is regulated as follows. Two specific sites, Thr-707 (activation loop of the kinase domain) and Thr-849 (turn motif), need to be phosphorylated for its full activation. In terms of biological role, contributes to invasiveness in malignant prostate cancer. This Mus musculus (Mouse) protein is Serine/threonine-protein kinase N3 (Pkn3).